The following is a 424-amino-acid chain: Virion nicking-joining enzyme (424 aa).

2 consecutive PLD phosphodiesterase domains span residues 110 to 137 (LGGV…DWRS) and 320 to 346 (YSRV…TGNY).

The protein belongs to the orthopoxvirus OPG042 family.

It localises to the virion. DNA nicking enzyme that cleaves extruded cruciform DNA at its tip. Probably nicks viral hairpins. This chain is Virion nicking-joining enzyme (OPG042), found in Vaccinia virus (strain Western Reserve) (VACV).